The chain runs to 184 residues: Photosystem I assembly protein Ycf4 (184 aa).

Helical transmembrane passes span 21 to 43 and 63 to 85; these read NYFW…VSSY and GIVM…FTIF.

The protein belongs to the Ycf4 family.

It localises to the plastid. The protein resides in the chloroplast thylakoid membrane. In terms of biological role, seems to be required for the assembly of the photosystem I complex. This Chaetosphaeridium globosum (Charophycean green alga) protein is Photosystem I assembly protein Ycf4.